The sequence spans 152 residues: Transcriptional regulator MraZ (152 aa).

2 SpoVT-AbrB domains span residues 5–52 and 81–124; these read VTSI…PLHE and ATEC…QDKQ.

This sequence belongs to the MraZ family. As to quaternary structure, forms oligomers.

It localises to the cytoplasm. The protein resides in the nucleoid. This Actinobacillus pleuropneumoniae serotype 3 (strain JL03) protein is Transcriptional regulator MraZ.